The chain runs to 150 residues: Cytochrome c oxidase subunit 5A, mitochondrial (150 aa).

The N-terminal 41 residues, 1–41 (MLGTALRRCAVAAASRAGPRGLQHPAPVPGPTAAIQSIRCY), are a transit peptide targeting the mitochondrion. The SIFI-degron signature appears at 2-17 (LGTALRRCAVAAASRA). N6-acetyllysine occurs at positions 87 and 113. Position 141 is a phosphothreonine (threonine 141).

The protein belongs to the cytochrome c oxidase subunit 5A family. As to quaternary structure, component of the cytochrome c oxidase (complex IV, CIV), a multisubunit enzyme composed of 14 subunits. The complex is composed of a catalytic core of 3 subunits MT-CO1, MT-CO2 and MT-CO3, encoded in the mitochondrial DNA, and 11 supernumerary subunits COX4I, COX5A, COX5B, COX6A, COX6B, COX6C, COX7A, COX7B, COX7C, COX8 and NDUFA4, which are encoded in the nuclear genome. The complex exists as a monomer or a dimer and forms supercomplexes (SCs) in the inner mitochondrial membrane with NADH-ubiquinone oxidoreductase (complex I, CI) and ubiquinol-cytochrome c oxidoreductase (cytochrome b-c1 complex, complex III, CIII), resulting in different assemblies (supercomplex SCI(1)III(2)IV(1) and megacomplex MCI(2)III(2)IV(2)). Interacts with AFG1L. Interacts with RAB5IF. Post-translationally, in response to mitochondrial stress, the precursor protein is ubiquitinated by the SIFI complex in the cytoplasm before mitochondrial import, leading to its degradation. Within the SIFI complex, UBR4 initiates ubiquitin chain that are further elongated or branched by KCMF1.

It localises to the mitochondrion inner membrane. It participates in energy metabolism; oxidative phosphorylation. Component of the cytochrome c oxidase, the last enzyme in the mitochondrial electron transport chain which drives oxidative phosphorylation. The respiratory chain contains 3 multisubunit complexes succinate dehydrogenase (complex II, CII), ubiquinol-cytochrome c oxidoreductase (cytochrome b-c1 complex, complex III, CIII) and cytochrome c oxidase (complex IV, CIV), that cooperate to transfer electrons derived from NADH and succinate to molecular oxygen, creating an electrochemical gradient over the inner membrane that drives transmembrane transport and the ATP synthase. Cytochrome c oxidase is the component of the respiratory chain that catalyzes the reduction of oxygen to water. Electrons originating from reduced cytochrome c in the intermembrane space (IMS) are transferred via the dinuclear copper A center (CU(A)) of subunit 2 and heme A of subunit 1 to the active site in subunit 1, a binuclear center (BNC) formed by heme A3 and copper B (CU(B)). The BNC reduces molecular oxygen to 2 water molecules using 4 electrons from cytochrome c in the IMS and 4 protons from the mitochondrial matrix. This chain is Cytochrome c oxidase subunit 5A, mitochondrial (COX5A), found in Nycticebus coucang (Slow loris).